Consider the following 161-residue polypeptide: Phosphopantetheine adenylyltransferase (161 aa).

T9 is a binding site for substrate. ATP-binding positions include 9–10 and H17; that span reads TF. Positions 41, 73, and 87 each coordinate substrate. Residues 88-90, E98, and 123-129 contribute to the ATP site; these read GLR and LSYISST.

The protein belongs to the bacterial CoaD family. Homohexamer. It depends on Mg(2+) as a cofactor.

It localises to the cytoplasm. It catalyses the reaction (R)-4'-phosphopantetheine + ATP + H(+) = 3'-dephospho-CoA + diphosphate. The protein operates within cofactor biosynthesis; coenzyme A biosynthesis; CoA from (R)-pantothenate: step 4/5. Reversibly transfers an adenylyl group from ATP to 4'-phosphopantetheine, yielding dephospho-CoA (dPCoA) and pyrophosphate. The polypeptide is Phosphopantetheine adenylyltransferase (Hahella chejuensis (strain KCTC 2396)).